We begin with the raw amino-acid sequence, 381 residues long: E3 ubiquitin-protein ligase RNF13 (381 aa).

An N-terminal signal peptide occupies residues 1–34 (MLLSIGMLMLSATQVYTILTVQLFAFLNLLPVEA). Residues 35–182 (DILAYNFENA…VPELSLPLEY (148 aa)) lie on the Lumenal side of the membrane. Residues 64–160 (LKGFLINSKP…GESSANSLKD (97 aa)) enclose the PA domain. Asparagine 88 carries an N-linked (GlcNAc...) asparagine glycan. Residues 183 to 203 (YLIPFLIIVGICLILIVIFMI) traverse the membrane as a helical segment. Topologically, residues 204-381 (TKFVQDRHRN…EQDYNIANTV (178 aa)) are cytoplasmic. The RING-type; atypical zinc-finger motif lies at 240–282 (CAICLEEYEDGDKLRILPCSHAYHCKCVDPWLTKTKKTCPVCK). Positions 285–381 (VVPSQGDSDS…EQDYNIANTV (97 aa)) are disordered. Residues 317-328 (SARTQSFGSLSE) show a composition bias toward polar residues. Positions 339 to 357 (SDYEDDDNEETDSSDADNE) are enriched in acidic residues. Over residues 365–381 (VQLQPNGEQDYNIANTV) the composition is skewed to polar residues.

In terms of assembly, interacts with ERN1. In terms of processing, autoubiquitinated. Post-translationally, N-glycosylated and also modified with chondroitin sulfate. In terms of tissue distribution, expressed in the brain, heart, kidney, liver and spleen. Higher expression in adult tissues compared to the embryonic counterparts.

Its subcellular location is the endoplasmic reticulum membrane. It localises to the late endosome membrane. The protein localises to the lysosome membrane. The protein resides in the nucleus inner membrane. It catalyses the reaction S-ubiquitinyl-[E2 ubiquitin-conjugating enzyme]-L-cysteine + [acceptor protein]-L-lysine = [E2 ubiquitin-conjugating enzyme]-L-cysteine + N(6)-ubiquitinyl-[acceptor protein]-L-lysine.. The protein operates within protein modification; protein ubiquitination. Functionally, E3 ubiquitin-protein ligase that regulates cell proliferation. Involved in apoptosis regulation. Mediates ER stress-induced activation of JNK signaling pathway and apoptosis by promoting ERN1 activation and splicing of XBP1 mRNA. Also involved in protein trafficking and localization. The sequence is that of E3 ubiquitin-protein ligase RNF13 (Rnf13) from Mus musculus (Mouse).